The following is a 947-amino-acid chain: Protein RRC1-like (947 aa).

Basic and acidic residues predominate over residues 1–11 (MVKDEFFLDHP). Disordered regions lie at residues 1-35 (MVKD…RMKQ) and 63-167 (PNDN…DELP). Positions 12–34 (GRKHRSRNTEKKKKPRRRERRMK) are enriched in basic residues. Basic and acidic residues-rich tracts occupy residues 66–84 (NKLK…DSIS) and 104–155 (KGPE…DHNS). The RRM domain maps to 187–268 (TNLYVVNLSS…YELKIGWGKV (82 aa)). The SURP motif repeat unit spans residues 336 to 379 (IIDTMALNVLDGGCAFEQAIMERGRGNPLFNFLFELGSKEHTYY). The disordered stretch occupies residues 412–434 (PPLPATRSPEHGKESRGTYAAGK). The CID domain occupies 444-589 (LTDSQRDEFE…GLRATFLRSR (146 aa)). An SAP domain is found at 638-672 (LMNRPISELERRCRHNGLSLLGGREMMVARLVCLK). Disordered regions lie at residues 752 to 797 (REDD…PENE) and 846 to 947 (GLSG…RGMR). 3 stretches are compositionally biased toward basic and acidic residues: residues 854–876 (LPEK…RSES), 888–916 (LTRE…LDKD), and 924–947 (SSRE…RGMR).

As to expression, expressed in leaves, inflorescence stems, roots, flower buds, open flowers and siliques.

Its function is as follows. Probable SR-like splicing factor. This Arabidopsis thaliana (Mouse-ear cress) protein is Protein RRC1-like.